Consider the following 71-residue polypeptide: uncharacterized protein (71 aa).

The interval 52–71 (KEKFERKEDEKSKPKGVRED) is disordered.

This is an uncharacterized protein from Archaeoglobus fulgidus (strain ATCC 49558 / DSM 4304 / JCM 9628 / NBRC 100126 / VC-16).